A 339-amino-acid polypeptide reads, in one-letter code: Ketol-acid reductoisomerase (NADP(+)) (339 aa).

One can recognise a KARI N-terminal Rossmann domain in the interval 1–182; sequence MRVYYDRDAD…GGGRSGIIET (182 aa). NADP(+) contacts are provided by residues 24 to 27, Arg-48, Ser-51, Ser-53, and 83 to 86; these read YGSQ and DELQ. His-108 is a catalytic residue. Gly-134 contributes to the NADP(+) binding site. Positions 183 to 328 constitute a KARI C-terminal knotted domain; the sequence is TFREECETDL…GRLRAMMPWI (146 aa). The Mg(2+) site is built by Asp-191, Glu-195, Glu-227, and Glu-231. Ser-252 is a binding site for substrate.

This sequence belongs to the ketol-acid reductoisomerase family. It depends on Mg(2+) as a cofactor.

The catalysed reaction is (2R)-2,3-dihydroxy-3-methylbutanoate + NADP(+) = (2S)-2-acetolactate + NADPH + H(+). It carries out the reaction (2R,3R)-2,3-dihydroxy-3-methylpentanoate + NADP(+) = (S)-2-ethyl-2-hydroxy-3-oxobutanoate + NADPH + H(+). It participates in amino-acid biosynthesis; L-isoleucine biosynthesis; L-isoleucine from 2-oxobutanoate: step 2/4. It functions in the pathway amino-acid biosynthesis; L-valine biosynthesis; L-valine from pyruvate: step 2/4. In terms of biological role, involved in the biosynthesis of branched-chain amino acids (BCAA). Catalyzes an alkyl-migration followed by a ketol-acid reduction of (S)-2-acetolactate (S2AL) to yield (R)-2,3-dihydroxy-isovalerate. In the isomerase reaction, S2AL is rearranged via a Mg-dependent methyl migration to produce 3-hydroxy-3-methyl-2-ketobutyrate (HMKB). In the reductase reaction, this 2-ketoacid undergoes a metal-dependent reduction by NADPH to yield (R)-2,3-dihydroxy-isovalerate. This is Ketol-acid reductoisomerase (NADP(+)) from Rhodospirillum rubrum (strain ATCC 11170 / ATH 1.1.1 / DSM 467 / LMG 4362 / NCIMB 8255 / S1).